A 314-amino-acid chain; its full sequence is Probable phytol kinase 1, chloroplastic (314 aa).

The N-terminal 62 residues, 1–62 (MAAAARPVDV…GVGAAAAPAV (62 aa)), are a transit peptide targeting the chloroplast. A run of 7 helical transmembrane segments spans residues 72 to 91 (AALR…YSLV), 111 to 131 (IVHV…SNST), 135 to 155 (FFAA…GLRL), 181 to 201 (YVIV…IGIV), 234 to 254 (IGSI…LFYF), 266 to 286 (LALG…CIPV), and 294 to 314 (ISVP…SSCC).

Belongs to the polyprenol kinase family.

The protein resides in the plastid. The protein localises to the chloroplast membrane. The catalysed reaction is phytol + CTP = phytyl phosphate + CDP + H(+). It functions in the pathway cofactor biosynthesis; tocopherol biosynthesis. Involved in the activation and reutilization of phytol from chlorophyll degradation in plant metabolism, including tocopherol biosynthesis. Catalyzes the conversion of phytol to phytol monophosphate (PMP). The polypeptide is Probable phytol kinase 1, chloroplastic (Oryza sativa subsp. japonica (Rice)).